We begin with the raw amino-acid sequence, 239 residues long: uncharacterized protein (239 aa).

Residues 129 to 155 form a disordered region; it reads DSLDDEDDNMISSNDPTKSPEEHDTTT. Serine 160 is subject to Phosphoserine.

This is an uncharacterized protein from Schizosaccharomyces pombe (strain 972 / ATCC 24843) (Fission yeast).